Reading from the N-terminus, the 147-residue chain is Protein YjdN (147 aa).

The chain is Protein YjdN (yjdN) from Escherichia coli (strain K12).